The primary structure comprises 230 residues: Large ribosomal subunit protein uL1 (230 aa).

It belongs to the universal ribosomal protein uL1 family. In terms of assembly, part of the 50S ribosomal subunit.

Functionally, binds directly to 23S rRNA. The L1 stalk is quite mobile in the ribosome, and is involved in E site tRNA release. In terms of biological role, protein L1 is also a translational repressor protein, it controls the translation of the L11 operon by binding to its mRNA. The protein is Large ribosomal subunit protein uL1 of Rhodopseudomonas palustris (strain BisA53).